The chain runs to 172 residues: Small ribosomal subunit protein uS5 (172 aa).

The S5 DRBM domain occupies 17–80 (LREKMIAVNR…EEARRNMVKV (64 aa)).

This sequence belongs to the universal ribosomal protein uS5 family. Part of the 30S ribosomal subunit. Contacts proteins S4 and S8.

With S4 and S12 plays an important role in translational accuracy. Functionally, located at the back of the 30S subunit body where it stabilizes the conformation of the head with respect to the body. The protein is Small ribosomal subunit protein uS5 of Verminephrobacter eiseniae (strain EF01-2).